A 509-amino-acid polypeptide reads, in one-letter code: Src substrate cortactin (509 aa).

The tract at residues 1–28 is disordered; it reads MWKASAGHAVSITQDDGGADDWETDPDF. Residues 17 to 28 show a composition bias toward acidic residues; it reads GGADDWETDPDF. Cortactin repeat units follow at residues 80-116, 117-153, 154-190, 191-227, and 228-264; these read ASHG…SQVD, SVRG…SQKD, YSSG…SQKD, YSKG…SQKD, and YVKG…SQKD. N6-acetyllysine occurs at positions 87 and 107. The residue at position 113 (S113) is a Phosphoserine. R119 carries the omega-N-methylarginine modification. N6-acetyllysine is present on K124. At K144 the chain carries N6-acetyllysine; alternate. K144 is covalently cross-linked (Glycyl lysine isopeptide (Lys-Gly) (interchain with G-Cter in SUMO1); alternate). K144 participates in a covalent cross-link: Glycyl lysine isopeptide (Lys-Gly) (interchain with G-Cter in SUMO2); alternate. The residue at position 150 (S150) is a Phosphoserine. K152, K161, and K171 each carry N6-acetyllysine. The residue at position 181 (K181) is an N6-acetyllysine; alternate. K181 is covalently cross-linked (Glycyl lysine isopeptide (Lys-Gly) (interchain with G-Cter in SUMO1); alternate). Residue K181 forms a Glycyl lysine isopeptide (Lys-Gly) (interchain with G-Cter in SUMO2); alternate linkage. 2 positions are modified to N6-acetyllysine: K193 and K198. Residue K218 forms a Glycyl lysine isopeptide (Lys-Gly) (interchain with G-Cter in SUMO1) linkage. K235 bears the N6-acetyllysine mark. Phosphoserine is present on S261. The stretch at 265–287 is one Cortactin 6; truncated repeat; the sequence is YAKGFGGKYGVQKDRMDKNASTF. N6-acetyllysine is present on residues K267, K272, K277, and K309. Residues 311–364 adopt a coiled-coil conformation; that stretch reads SNIRANFENLAKEREQEDRRKAEAERAQRMAQERQEQEEARRKLEEQARAKKQT. Residues 318–409 form a disordered region; that stretch reads ENLAKEREQE…EPEPEYSTEA (92 aa). Residues 320–359 show a composition bias toward basic and acidic residues; it reads LAKEREQEDRRKAEAERAQRMAQERQEQEEARRKLEEQAR. Phosphothreonine is present on T364. Residues S368, S370, S380, and S381 each carry the phosphoserine modification. A Phosphotyrosine; by FAK1 modification is found at Y384. The span at 393 to 406 shows a compositional bias: low complexity; sequence EPSYGSSEPEPEYS. Y405 is subject to Phosphotyrosine. A Phosphoserine modification is found at S406. 2 positions are modified to phosphotyrosine; by FAK1: Y429 and Y445. Residues Y445 and Y448 each carry the phosphotyrosine; by SRC modification. The SH3 domain occupies 451-509; it reads DLGITAIALYDYQAAGDDEISFDPDDVITNIEMIDDGWWRGVCKGRYGLFPANYVELRQ.

As to quaternary structure, part of a complex composed of NEDD9, AURKA and CTTN; within the complex NEDD9 acts as a scaffold protein and is required for complex formation. Interacts (via N-terminus) with NEDD9. Identified in a complex containing FGFR4, NCAM1, CDH2, PLCG1, FRS2, SRC, SHC1, GAP43 and CTTN. Forms a complex with ABL1 and MYLK. Interacts with SHANK2 and SHANK3 (via its SH3 domain). Interacts with PLXDC2 and SRCIN1. Interacts with SAMSN1 (via SH3 domain). Interacts (via SH3 domain) with ASAP1 (via Pro-rich region). Interacts with FER. Interacts with FGD1. Interacts with ABL2. Interacts with CTTNBP2NL; this interaction may target CTTN to stress fibers. Interacts with CTTNBP2; this interaction may target CTTN at the cell cortex or dendritic spines. Interacts (via SH3 domain) with DNM2. Interacts with ACTN1. Interacts with KCNA2 (via non-phosphorylated C-terminus). Interacts with PTK2/FAK1. Interacts with KCNH1. Interacts (via SH3 domain) with DIP2A (via N-terminus); the interaction enhances CTTN acetylation and is required for proper synaptic transmission. Interacts with XIRP1 (via N-terminus); the interaction promotes CTTN localization to intercalated disks in cardiomyocytes. In terms of processing, acetylated. Post-translationally, phosphorylated by FER. Phosphorylated in response to FGR activation. Phosphorylation by SRC promotes MYLK binding. Tyrosine phosphorylation in transformed cells may contribute to cellular growth regulation and transformation. Phosphorylated by PKN2 at both serine and threonine residues in a GTP-bound Rac1-dependent manner in hyaluronan-induced astrocytes and hence down-regulated CTTN ability to associate with filamentous actin. Phosphorylated on tyrosine residues in response to CHRM1 activation. Phosphorylated by PTK2/FAK1 in response to cell adhesion. Detected in liver (at protein level).

The protein resides in the cytoplasm. Its subcellular location is the cytoskeleton. It is found in the cell projection. It localises to the lamellipodium. The protein localises to the ruffle. The protein resides in the dendrite. Its subcellular location is the cell membrane. It is found in the podosome. It localises to the cell junction. The protein localises to the focal adhesion. The protein resides in the membrane. Its subcellular location is the clathrin-coated pit. It is found in the dendritic spine. It localises to the cell cortex. The protein localises to the endoplasmic reticulum. Functionally, contributes to the organization of the actin cytoskeleton and cell shape. Plays a role in the formation of lamellipodia and in cell migration. Plays a role in the regulation of neuron morphology, axon growth and formation of neuronal growth cones. Through its interaction with CTTNBP2, involved in the regulation of neuronal spine density. Plays a role in focal adhesion assembly and turnover. In complex with ABL1 and MYLK regulates cortical actin-based cytoskeletal rearrangement critical to sphingosine 1-phosphate (S1P)-mediated endothelial cell (EC) barrier enhancement. Plays a role in intracellular protein transport and endocytosis, and in modulating the levels of potassium channels present at the cell membrane. Plays a role in receptor-mediated endocytosis via clathrin-coated pits. Required for stabilization of KCNH1 channels at the cell membrane. The polypeptide is Src substrate cortactin (Rattus norvegicus (Rat)).